Here is a 357-residue protein sequence, read N- to C-terminus: H-2 class I histocompatibility antigen, D-37 alpha chain (357 aa).

Residues 1-20 (MLLFAHLLQLLVSATVPTQS) form the signal peptide. The interval 21–110 (SPHSLRYFTT…LLGYYNQSND (90 aa)) is alpha-1. Topologically, residues 21-304 (SPHSLRYFTT…EPPPSTVSNM (284 aa)) are extracellular. Asn-106 carries N-linked (GlcNAc...) asparagine glycosylation. The interval 111-202 (ESHTLQWMYG…RLGNETLQRS (92 aa)) is alpha-2. Cysteines 121 and 184 form a disulfide. N-linked (GlcNAc...) asparagine glycosylation is present at Asn-196. The segment at 203–294 (DPPKAHVTHH…GLPEPLTLRW (92 aa)) is alpha-3. Residues 205 to 293 (PKAHVTHHPR…EGLPEPLTLR (89 aa)) enclose the Ig-like C1-type domain. Residues Cys-223 and Cys-279 are joined by a disulfide bond. Residues 295-304 (EPPPSTVSNM) are connecting peptide. Residues 305 to 327 (VIIAVLVVLGAVIILGAVVAFVM) form a helical membrane-spanning segment. Residues 328-357 (KRRRHIGVKGCYAHVLGSKSFQTSDWPQKA) are Cytoplasmic-facing. At Ser-347 the chain carries Phosphoserine.

This sequence belongs to the MHC class I family. Heterodimer of an alpha chain and a beta chain (beta-2-microglobulin).

It is found in the membrane. Its function is as follows. Involved in the presentation of foreign antigens to the immune system. In Mus musculus (Mouse), this protein is H-2 class I histocompatibility antigen, D-37 alpha chain (H2-T23).